The sequence spans 451 residues: Tubulin alpha chain (451 aa).

A GTP-binding site is contributed by Gln11. The residue at position 40 (Lys40) is an N6-acetyllysine. GTP is bound by residues Glu71, Gly144, Thr145, Thr179, Asn206, and Asn228. Glu71 provides a ligand contact to Mg(2+). Glu254 is a catalytic residue.

This sequence belongs to the tubulin family. In terms of assembly, dimer of alpha and beta chains. A typical microtubule is a hollow water-filled tube with an outer diameter of 25 nm and an inner diameter of 15 nM. Alpha-beta heterodimers associate head-to-tail to form protofilaments running lengthwise along the microtubule wall with the beta-tubulin subunit facing the microtubule plus end conferring a structural polarity. Microtubules usually have 13 protofilaments but different protofilament numbers can be found in some organisms and specialized cells. Mg(2+) is required as a cofactor. Undergoes a tyrosination/detyrosination cycle, the cyclic removal and re-addition of a C-terminal tyrosine residue by the enzymes tubulin tyrosine carboxypeptidase (TTCP) and tubulin tyrosine ligase (TTL), respectively. Post-translationally, acetylation of alpha chains at Lys-40 stabilizes microtubules and affects affinity and processivity of microtubule motors. This modification has a role in multiple cellular functions, ranging from cell motility, cell cycle progression or cell differentiation to intracellular trafficking and signaling.

It localises to the cytoplasm. The protein resides in the cytoskeleton. It carries out the reaction GTP + H2O = GDP + phosphate + H(+). Tubulin is the major constituent of microtubules, a cylinder consisting of laterally associated linear protofilaments composed of alpha- and beta-tubulin heterodimers. Microtubules grow by the addition of GTP-tubulin dimers to the microtubule end, where a stabilizing cap forms. Below the cap, tubulin dimers are in GDP-bound state, owing to GTPase activity of alpha-tubulin. The chain is Tubulin alpha chain (TUBA) from Chlorella vulgaris (Green alga).